A 707-amino-acid polypeptide reads, in one-letter code: G protein-coupled receptor kinase 2 (707 aa).

The segment at 1 to 190 (MADLEAVLAD…ELNMQLTMND (190 aa)) is N-terminal. One can recognise an RGS domain in the interval 54 to 175 (KFDKIFNQKL…LESDKFTRFC (122 aa)). Residues 191–455 (FSVHRIIGRG…PTEVKEHPFF (265 aa)) form the Protein kinase domain. ATP is bound by residues 197–205 (IGRGGFGEV) and lysine 220. The active-site Proton acceptor is the aspartate 318. Positions 456-523 (KDVDWQTVYL…VISERWQNEI (68 aa)) constitute an AGC-kinase C-terminal domain. One can recognise a PH domain in the interval 558-658 (DVIVHGYIKK…WHTSLRTAHK (101 aa)).

Belongs to the protein kinase superfamily. AGC Ser/Thr protein kinase family. GPRK subfamily. In terms of assembly, interacts with amx-2; the interaction promotes phosphorylation of amx-2. Expressed in many neurons in the adult including the ASH neurons and other sensory neurons, many interneurons, and motor neurons of the ventral nerve cord. Expressed broadly in head neurons and is detected in several head acetylcholine neurons including the AVA, AVB, AVD and AVE premotor interneurons, the SMD and RMD head motor neurons, and the AIN, AIY, SIA, SIB and SAA interneurons. Expressed in HSN motor neurons and VC4/VC5 motor neurons. Also expressed in vulval muscle cells. Expressed in premotor and RIS interneurons. Expressed in ciliated neurons such as AWA, AWB, AWC, ASH and ADF olfactory and nociceptive neurons, and in chemosensory ASH neurons. Expressed in RMG neurons and AVK interneurons.

It carries out the reaction [G-protein-coupled receptor] + ATP = [G-protein-coupled receptor]-phosphate + ADP + H(+). Functionally, specifically phosphorylates the activated forms of G protein-coupled receptors. Required in adult sensory neurons for chemotaxis. Plays a role in the ASH sensory neurons in the chemotaxis response to NaCl where it is likely to modulate the strength of the NaCl avoidance response which occurs at high NaCl concentrations. Required in the HSN motor neurons for normal egg laying by promoting phosphorylation of amine oxidase amx-2 which inhibits amx-2 activity, preventing metabolism of serotonin. Acts in head acetylcholine neurons to positively regulate locomotion. Inactivates dopamine receptor dop-3 which leads to inactivation of guanine nucleotide-binding protein G(o) subunit goa-1 and activation of the unc-77/nca-1 and nca-2 ion channel proteins. Acts as a positive regulator of swimming by inactivating two dopamine receptors, dop-3 in the premotor interneurons that negatively controls early swimming through the nca ion channel, and dop-1 in the RIS neuron that inhibits late-stage swimming via the signaling of FMRFamide-like neuropeptide flp-11. Controls movement quiescence by negatively regulating multiple targets including egl-4 in ciliated neurons, the level of ligands of the neuropeptide receptor npr-1 in RMG neurons, and the secretion of flp-1 from AVK interneurons. This chain is G protein-coupled receptor kinase 2 (grk-2), found in Caenorhabditis elegans.